The chain runs to 310 residues: Epoxyqueuosine reductase (310 aa).

Aspartate 133 acts as the Proton donor in catalysis. One can recognise a 4Fe-4S ferredoxin-type domain in the interval 179-208 (YDNPSDKDYCGTCTRCVDACPTDAILQDNL). [4Fe-4S] cluster-binding residues include cysteine 188, cysteine 191, cysteine 194, cysteine 198, cysteine 214, cysteine 241, cysteine 244, and cysteine 248.

It belongs to the QueG family. As to quaternary structure, monomer. It depends on cob(II)alamin as a cofactor. The cofactor is [4Fe-4S] cluster.

Its subcellular location is the cytoplasm. The catalysed reaction is epoxyqueuosine(34) in tRNA + AH2 = queuosine(34) in tRNA + A + H2O. Its pathway is tRNA modification; tRNA-queuosine biosynthesis. Catalyzes the conversion of epoxyqueuosine (oQ) to queuosine (Q), which is a hypermodified base found in the wobble positions of tRNA(Asp), tRNA(Asn), tRNA(His) and tRNA(Tyr). This chain is Epoxyqueuosine reductase, found in Cyclobacterium marinum (strain ATCC 25205 / DSM 745 / LMG 13164 / NCIMB 1802) (Flectobacillus marinus).